The sequence spans 460 residues: MTNYAIILAAGKGTRMTSDLPKVLHKVSGLTMLEHGFRSGKAISPEKSVTVIGHKSKMVRGGLADQSAFVHQTEQLGTGHAVMMAETQLEGLEGHTLVIAGDTPLITGESLKSLIDFHVNHKNVATILTATAQDSFGYGRIVRNKNGEVIKIVEQKDANEYEQQLKEINTGTYVFDNKRLFEALKCITTNNAQGEYYLTDVVAIFRANKEKVGAYILRDFNESLGVNDRVALATAETVMRQRITQKHMVNGVTFHNPETVYIESDVEIAPDVLIEGNVTLKGRTHIGSGTVLTNGTYIVDSEIGQGSIITNSMIESSVLAAGVTVGPYAHLRPGTTLDREVHIGNFVEVKGSHIGEKTKAGHLTYIGNAQVGSSVNVGAGTITVNYDGQNKYETVIGDHAFIGSNSTLIAPLEIGDHALTAAGSTISKTVPIDSIAIGRSRQVTKEGYAKRLAHHPSRSK.

Residues 1–229 (MTNYAIILAA…FNESLGVNDR (229 aa)) form a pyrophosphorylase region. UDP-N-acetyl-alpha-D-glucosamine-binding positions include 8–11 (LAAG), Lys22, Gln72, and 77–78 (GT). Asp102 contacts Mg(2+). The UDP-N-acetyl-alpha-D-glucosamine site is built by Gly139, Glu154, Asn169, and Asn227. Mg(2+) is bound at residue Asn227. A linker region spans residues 230–250 (VALATAETVMRQRITQKHMVN). The N-acetyltransferase stretch occupies residues 251 to 460 (GVTFHNPETV…RLAHHPSRSK (210 aa)). UDP-N-acetyl-alpha-D-glucosamine is bound by residues Arg332 and Lys350. His362 functions as the Proton acceptor in the catalytic mechanism. UDP-N-acetyl-alpha-D-glucosamine contacts are provided by Tyr365 and Asn376. Residues Ala379, 385–386 (NY), Ser404, Ala422, and Arg439 each bind acetyl-CoA.

This sequence in the N-terminal section; belongs to the N-acetylglucosamine-1-phosphate uridyltransferase family. The protein in the C-terminal section; belongs to the transferase hexapeptide repeat family. As to quaternary structure, homotrimer. Requires Mg(2+) as cofactor.

The protein resides in the cytoplasm. The catalysed reaction is alpha-D-glucosamine 1-phosphate + acetyl-CoA = N-acetyl-alpha-D-glucosamine 1-phosphate + CoA + H(+). It catalyses the reaction N-acetyl-alpha-D-glucosamine 1-phosphate + UTP + H(+) = UDP-N-acetyl-alpha-D-glucosamine + diphosphate. Its pathway is nucleotide-sugar biosynthesis; UDP-N-acetyl-alpha-D-glucosamine biosynthesis; N-acetyl-alpha-D-glucosamine 1-phosphate from alpha-D-glucosamine 6-phosphate (route II): step 2/2. The protein operates within nucleotide-sugar biosynthesis; UDP-N-acetyl-alpha-D-glucosamine biosynthesis; UDP-N-acetyl-alpha-D-glucosamine from N-acetyl-alpha-D-glucosamine 1-phosphate: step 1/1. It participates in bacterial outer membrane biogenesis; LPS lipid A biosynthesis. Its function is as follows. Catalyzes the last two sequential reactions in the de novo biosynthetic pathway for UDP-N-acetylglucosamine (UDP-GlcNAc). The C-terminal domain catalyzes the transfer of acetyl group from acetyl coenzyme A to glucosamine-1-phosphate (GlcN-1-P) to produce N-acetylglucosamine-1-phosphate (GlcNAc-1-P), which is converted into UDP-GlcNAc by the transfer of uridine 5-monophosphate (from uridine 5-triphosphate), a reaction catalyzed by the N-terminal domain. In Streptococcus pyogenes serotype M49 (strain NZ131), this protein is Bifunctional protein GlmU.